The following is a 434-amino-acid chain: Enolase (434 aa).

Q163 contributes to the (2R)-2-phosphoglycerate binding site. The active-site Proton donor is the E205. Residues D242, E291, and D318 each contribute to the Mg(2+) site. (2R)-2-phosphoglycerate contacts are provided by K343, R372, S373, and K394. The Proton acceptor role is filled by K343.

Belongs to the enolase family. It depends on Mg(2+) as a cofactor.

It is found in the cytoplasm. The protein resides in the secreted. It localises to the cell surface. It catalyses the reaction (2R)-2-phosphoglycerate = phosphoenolpyruvate + H2O. Its pathway is carbohydrate degradation; glycolysis; pyruvate from D-glyceraldehyde 3-phosphate: step 4/5. Catalyzes the reversible conversion of 2-phosphoglycerate (2-PG) into phosphoenolpyruvate (PEP). It is essential for the degradation of carbohydrates via glycolysis. The protein is Enolase of Streptococcus sanguinis (strain SK36).